A 385-amino-acid chain; its full sequence is Cytochrome b (385 aa).

Transmembrane regions (helical) follow at residues 32-52 (MGSL…FMAM), 76-98 (YILR…MHMA), 113-133 (LWNV…LGYC), and 179-199 (FFAL…MHLM). Heme b-binding residues include H82 and H96. Heme b is bound by residues H183 and H197. H202 contributes to the a ubiquinone binding site. A run of 4 helical transmembrane segments spans residues 225-245 (FIFK…LFVF), 289-309 (LLGV…PFTD), 321-341 (LSKF…QIGA), and 348-368 (YVLM…IIVP).

It belongs to the cytochrome b family. As to quaternary structure, fungal cytochrome b-c1 complex contains 10 subunits; 3 respiratory subunits, 2 core proteins and 5 low-molecular weight proteins. Cytochrome b-c1 complex is a homodimer. Heme b is required as a cofactor.

It is found in the mitochondrion inner membrane. In terms of biological role, component of the ubiquinol-cytochrome c reductase complex (complex III or cytochrome b-c1 complex) that is part of the mitochondrial respiratory chain. The b-c1 complex mediates electron transfer from ubiquinol to cytochrome c. Contributes to the generation of a proton gradient across the mitochondrial membrane that is then used for ATP synthesis. The chain is Cytochrome b (COB) from Saccharomyces paradoxus (Yeast).